A 246-amino-acid chain; its full sequence is Proteasome subunit beta type-4 (246 aa).

The propeptide occupies 1–23 (MTTFSVPIDNGDSMKIAEEESQR). The Nucleophile role is filled by Thr-24.

Belongs to the peptidase T1B family. As to quaternary structure, component of the 20S core complex of the 26S proteasome. The 26S proteasome is composed of a core protease (CP), known as the 20S proteasome, capped at one or both ends by the 19S regulatory particle (RP/PA700). The 20S proteasome core is composed of 28 subunits that are arranged in four stacked rings, resulting in a barrel-shaped structure. The two end rings are each formed by seven alpha subunits, and the two central rings are each formed by seven beta subunits. The catalytic chamber with the active sites is on the inside of the barrel. Ubiquitous low levels, higher expression in siliques and flowers.

It localises to the cytoplasm. The protein localises to the nucleus. Non-catalytic component of the proteasome, a multicatalytic proteinase complex which is characterized by its ability to cleave peptides with Arg, Phe, Tyr, Leu, and Glu adjacent to the leaving group at neutral or slightly basic pH. The proteasome has an ATP-dependent proteolytic activity. The sequence is that of Proteasome subunit beta type-4 (PBG1) from Arabidopsis thaliana (Mouse-ear cress).